Here is a 319-residue protein sequence, read N- to C-terminus: Vomeronasal type-1 receptor 96 (319 aa).

Over 1-19 (MNKVNILPSDTNIKITLFS) the chain is Extracellular. A helical transmembrane segment spans residues 20–40 (EVSVGISANSVLFFAHLCMFF). Over 41 to 49 (EENRSKPID) the chain is Cytoplasmic. The helical transmembrane segment at 50 to 70 (LCIAFLSLTQLMLLVTMGLIA) threads the bilayer. The Extracellular segment spans residues 71–93 (ADMFMSQGIWDSTTCRSIIYFHR). Cysteines 85 and 172 form a disulfide. The helical transmembrane segment at 94–114 (LLRGFNLCAACLLHILWTFTL) threads the bilayer. Over 115-134 (SPRSSCLTKFKHKSPHHISC) the chain is Cytoplasmic. Residues 135–155 (AFFSLCVLYMLFSSHLFVLII) traverse the membrane as a helical segment. Residues 156 to 193 (ATSNLTSDHFMYVTQSCSILPMSYSRTTMFSLVMVTRE) lie on the Extracellular side of the membrane. Asn-159 is a glycosylation site (N-linked (GlcNAc...) asparagine). Residues 194–214 (AFLISLMALFSGYMVTLLWRH) traverse the membrane as a helical segment. Residues 215 to 238 (KKQVQHLHSTSLSSKSSPQQRATR) are Cytoplasmic-facing. The chain crosses the membrane as a helical span at residues 239–259 (TILLLMSFFVVLYILDIVIFQ). The Extracellular portion of the chain corresponds to 260–269 (SRTKFKDGSM). The helical transmembrane segment at 270–290 (FYSLHIIVSHSYATISPFVFI) threads the bilayer. Topologically, residues 291-319 (FSDKRIIKFLGSMSGRIINICLFSDGYGP) are cytoplasmic.

The protein belongs to the G-protein coupled receptor 1 family.

It localises to the cell membrane. Functionally, putative pheromone receptor implicated in the regulation of social as well as reproductive behavior. The chain is Vomeronasal type-1 receptor 96 (Vom1r96) from Rattus norvegicus (Rat).